Consider the following 303-residue polypeptide: Protein bottleneck (303 aa).

Disordered stretches follow at residues 102–142 (SKRN…PTVT) and 185–272 (VATT…ASVR). 2 stretches are compositionally biased toward low complexity: residues 115 to 138 (RQQE…QQQE) and 185 to 197 (VATT…TANS). The segment covering 260–272 (ATISRQSSSASVR) has biased composition (polar residues).

Restricted to the blastoderm.

It is found in the cytoplasm. Its subcellular location is the cytoskeleton. In terms of biological role, acts as a regulator of the microfilament network governing cellularization of the embryo. Determines the timing of a key conformational transition in the cortical microfilament network: the proper coordination of membrane invagination and basal closure of the cells. To do this, bnk possibly physically links neighboring contractile units of the early cycle 14 microfilament network in a manner that prevents basal constriction until the proper stage has been reached. Bnk together with nullo and Sry-alpha may provide auxiliary functions, by acting both to stabilize a large and dynamic microfilament structure and regulate its functions. This chain is Protein bottleneck (bnk), found in Drosophila melanogaster (Fruit fly).